Here is a 218-residue protein sequence, read N- to C-terminus: Ribosomal RNA small subunit methyltransferase G (218 aa).

Residues glycine 82, leucine 87, 137-138 (VE), and arginine 152 each bind S-adenosyl-L-methionine.

It belongs to the methyltransferase superfamily. RNA methyltransferase RsmG family.

The protein resides in the cytoplasm. It carries out the reaction guanosine(527) in 16S rRNA + S-adenosyl-L-methionine = N(7)-methylguanosine(527) in 16S rRNA + S-adenosyl-L-homocysteine. Specifically methylates the N7 position of guanine in position 527 of 16S rRNA. The sequence is that of Ribosomal RNA small subunit methyltransferase G from Herminiimonas arsenicoxydans.